Reading from the N-terminus, the 414-residue chain is Transforming growth factor beta-2 proprotein (414 aa).

The first 19 residues, 1–19, serve as a signal peptide directing secretion; sequence MHYCVLSAFLILHLVTVAL. N-linked (GlcNAc...) asparagine glycans are attached at residues N72, N140, and N241. 4 cysteine pairs are disulfide-bonded: C309–C318, C317–C380, C346–C411, and C350–C413.

It belongs to the TGF-beta family. In terms of assembly, interacts with the serine proteases, HTRA1 and HTRA3. Interacts with ASPN. Interacts with MFAP5. Interacts with Transforming growth factor beta-2 (TGF-beta-2) chain; interaction is non-covalent and maintains (TGF-beta-2) in a latent state. Interacts with LRRC32/GARP; leading to regulate activation of TGF-beta-2. Interacts with NREP; the interaction results in a decrease in TGFB2 autoinduction. As to quaternary structure, transforming growth factor beta-2: Homodimer; disulfide-linked. Transforming growth factor beta-2: Interacts with TGF-beta receptors (TGFBR1 and TGFBR2), leading to signal transduction. In terms of processing, the precursor proprotein is cleaved in the Golgi apparatus to form Transforming growth factor beta-2 (TGF-beta-2) and Latency-associated peptide (LAP) chains, which remain non-covalently linked, rendering TGF-beta-2 inactive.

Its subcellular location is the secreted. The protein localises to the extracellular space. The protein resides in the extracellular matrix. Functionally, precursor of the Latency-associated peptide (LAP) and Transforming growth factor beta-2 (TGF-beta-2) chains, which constitute the regulatory and active subunit of TGF-beta-2, respectively. Required to maintain the Transforming growth factor beta-2 (TGF-beta-2) chain in a latent state during storage in extracellular matrix. Associates non-covalently with TGF-beta-2 and regulates its activation via interaction with 'milieu molecules', such as LTBP1 and LRRC32/GARP, that control activation of TGF-beta-2. In terms of biological role, multifunctional protein that regulates various processes such as angiogenesis and heart development. Activation into mature form follows different steps: following cleavage of the proprotein in the Golgi apparatus, Latency-associated peptide (LAP) and Transforming growth factor beta-2 (TGF-beta-2) chains remain non-covalently linked rendering TGF-beta-2 inactive during storage in extracellular matrix. At the same time, LAP chain interacts with 'milieu molecules', such as LTBP1 and LRRC32/GARP, that control activation of TGF-beta-2 and maintain it in a latent state during storage in extracellular milieus. Once activated following release of LAP, TGF-beta-2 acts by binding to TGF-beta receptors (TGFBR1 and TGFBR2), which transduce signal. This is Transforming growth factor beta-2 proprotein (TGFB2) from Chlorocebus aethiops (Green monkey).